The sequence spans 731 residues: MEAQHNETEAAGKPAAKKTTRTRKPRASKQATFIAEAPAMPIAIKEPGQFGRVNILNCQPSVEDDVYAARVEIGEQFTVSAQVFMEGRTKVGATAVLKNPRGRIMARVPMTVENAGLDLYTAKLQAGEHSTLNPWDAEFAEVKKQLGNWRVAIEGWEDTYGAWLHDARIKVDVLSDVENTLTSGSELLTRWASTRDANLNAEQRKTLREAAKSMMDTSLDAKSRLTFADNADIEALHETNPLRDGLTSSGDHVFHVERPKSSFSAWYQFFPRSEGAYLDDNGKKVQGNFHTAVSGLERAKAEGFNIVYLPPIFPIGVTNRKGPDGALNAGPDDPGSPFGIGSELGGHDTVDPLLGTMDDFKAFCQRAHELNLEVALDFALQCSPDHPWVKEHPNWFRTKPDGSIAYAENPPKKYQDIYPIDFDNDLEGIEREVERIMNLWIDAGVTIFRVDNPHTKPVRFWQDVIAAVTKKHPEVLFLAEAFTRPAMVRALSYAGFTQSHCYFPWRNTKPQLEEFLQETNGKGGYYQHNTFWPTTPDILTAYVRDGGVAAHAIRAVLAALGSPSWGIYNGYELIENRQRADAEEQSSNEKFEIKVRDWSAANRIGISKLLTSLNEIRSKHAATTSYHNLTILPSANENIIAFARQTEGRFTKDGRTDTLIVVVNLDPYNEQQSSIHVDAKALGLPTEHPYRVKDQLTGREYDWSWDNFVSLAPWADVAHVFHVETGEQPLD.

Residues 1-10 (MEAQHNETEA) are compositionally biased toward basic and acidic residues. Positions 1-31 (MEAQHNETEAAGKPAAKKTTRTRKPRASKQA) are disordered. Residues 15 to 27 (AAKKTTRTRKPRA) are compositionally biased toward basic residues. Alpha-maltose 1-phosphate-binding residues include Lys-321, Gln-381, and Asp-416. Asp-451 acts as the Nucleophile in catalysis. Asn-452 lines the alpha-maltose 1-phosphate pocket. The active-site Proton donor is Glu-480. 590–591 (KF) lines the alpha-maltose 1-phosphate pocket.

The protein belongs to the glycosyl hydrolase 13 family. GlgE subfamily. Homodimer.

It carries out the reaction alpha-maltose 1-phosphate + [(1-&gt;4)-alpha-D-glucosyl](n) = [(1-&gt;4)-alpha-D-glucosyl](n+2) + phosphate. Maltosyltransferase that uses maltose 1-phosphate (M1P) as the sugar donor to elongate linear or branched alpha-(1-&gt;4)-glucans. Is involved in a branched alpha-glucan biosynthetic pathway from trehalose, together with TreS, Mak and GlgB. The protein is Alpha-1,4-glucan:maltose-1-phosphate maltosyltransferase of Bifidobacterium animalis subsp. lactis (strain Bl-04 / DGCC2908 / RB 4825 / SD5219).